The following is a 1343-amino-acid chain: uncharacterized protein (1343 aa).

A helical membrane pass occupies residues 432 to 449 (LYVYFVTTKTGVVAFSLL).

It belongs to the IIV-6 295L family.

The protein resides in the membrane. This is an uncharacterized protein from Acheta domesticus (House cricket).